The sequence spans 239 residues: U-scoloptoxin(11)-Sm3a (239 aa).

An N-terminal signal peptide occupies residues 1 to 16 (MINFLLLVLILSVLES).

It belongs to the scoloptoxin-11 family. Post-translationally, contains 9 disulfide bonds. In terms of tissue distribution, expressed by the venom gland.

The protein resides in the secreted. This Scolopendra morsitans (Tanzanian blue ringleg centipede) protein is U-scoloptoxin(11)-Sm3a.